The chain runs to 333 residues: PRKC apoptosis WT1 regulator protein (333 aa).

4 stretches are compositionally biased toward low complexity: residues 1-14, 33-51, 66-80, and 105-116; these read MATGGYRSGGSTTT, PAGPGSSGGDPAAKSPAGS, GPAGAAAPAAPAPGA, and PSAAAASGAPGS. The interval 1 to 262 is disordered; the sequence is MATGGYRSGG…ASFSSSSTLE (262 aa). The B30.2/SPRY domain-binding motif motif lies at 62-66; that stretch reads ELNHG. Residues 138–154 carry the Nuclear localization signal motif; that stretch reads RKGKGQIEKRKLREKRR. A selective for apoptosis induction in cancer cells (SAC) region spans residues 138–196; that stretch reads RKGKGQIEKRKLREKRRSTGVVNIPAAECLDEYEDDEAGQKERKREDAITQQNTIQNEA. At Thr-156 the chain carries Phosphothreonine; by PKA. A compositionally biased stretch (basic and acidic residues) spans 175-185; it reads AGQKERKREDA. The segment covering 186–196 has biased composition (polar residues); sequence ITQQNTIQNEA. Ser-224 bears the Phosphoserine mark. Over residues 235 to 248 the composition is skewed to basic and acidic residues; it reads PRTDRSGFSRHNRD. Residues 255 to 333 adopt a coiled-coil conformation; sequence FSSSSTLEKR…LLKVVGQLTR (79 aa). The segment at 293-333 is leucine-zipper; sequence IGKLKEEIDLLNRDLDDMEDENEQLKQENKTLLKVVGQLTR.

As to quaternary structure, homooligomer. Interacts (via the C-terminal region) with WT1. Interacts with THAP1. Interacts with AATF. Interacts with BACE1. Interacts with SPSB1 (via B30.2/SPRY domain); this interaction is direct and occurs in association with the Elongin BC complex. Interacts with SPSB2 (via B30.2/SPRY domain); this interaction occurs in association with the Elongin BC complex. Interacts with SPSB4 (via B30.2/SPRY domain); this interaction occurs in association with the Elongin BC complex. Component of a ternary complex composed of SQSTM1 and PRKCZ. Interacts with actin. Preferentially phosphorylated at the Thr-156 by PKC in cancer cells.

It is found in the cytoplasm. The protein resides in the nucleus. In terms of biological role, pro-apoptotic protein capable of selectively inducing apoptosis in cancer cells, sensitizing the cells to diverse apoptotic stimuli and causing regression of tumors in animal models. Induces apoptosis in certain cancer cells by activation of the Fas prodeath pathway and coparallel inhibition of NF-kappa-B transcriptional activity. Inhibits the transcriptional activation and augments the transcriptional repression mediated by WT1. Down-regulates the anti-apoptotic protein BCL2 via its interaction with WT1. Also seems to be a transcriptional repressor by itself. May be directly involved in regulating the amyloid precursor protein (APP) cleavage activity of BACE1. In Mus musculus (Mouse), this protein is PRKC apoptosis WT1 regulator protein (Pawr).